Consider the following 794-residue polypeptide: PAN2-PAN3 deadenylation complex subunit PAN3 (794 aa).

The C3H1-type zinc finger occupies serine 7–glutamine 36. Disordered stretches follow at residues proline 40–lysine 97 and alanine 187–leucine 226. 2 stretches are compositionally biased toward polar residues: residues isoleucine 83–threonine 94 and valine 189–alanine 199. Low complexity predominate over residues asparagine 200–leucine 226. The interval glutamine 372 to serine 668 is pseudokinase domain. ATP-binding positions include arginine 425 and aspartate 494 to threonine 501. Positions serine 669–phenylalanine 707 form a coiled coil. Residues isoleucine 708–glycine 794 are knob domain.

It belongs to the protein kinase superfamily. PAN3 family. In terms of assembly, homodimer. Forms a heterotrimer with a catalytic subunit PAN2 to form the poly(A)-nuclease (PAN) deadenylation complex. Interacts (via PAM-2 motif) with poly(A)-binding protein PAB1 (via PABC domain), conferring substrate specificity of the enzyme complex.

The protein localises to the cytoplasm. In terms of biological role, regulatory subunit of the poly(A)-nuclease (PAN) deadenylation complex, one of two cytoplasmic mRNA deadenylases involved in mRNA turnover. PAN specifically shortens poly(A) tails of RNA and the activity is stimulated by poly(A)-binding protein PAB1. PAN deadenylation is followed by rapid degradation of the shortened mRNA tails by the CCR4-NOT complex. Deadenylated mRNAs are then degraded by two alternative mechanisms, namely exosome-mediated 3'-5' exonucleolytic degradation, or deadenylation-dependent mRNA decaping and subsequent 5'-3' exonucleolytic degradation by XRN1. May also be involved in post-transcriptional maturation of mRNA poly(A) tails. PAN3 acts as a positive regulator for PAN activity, recruiting the catalytic subunit PAN2 to mRNA via its interaction with RNA and with PAB1. This chain is PAN2-PAN3 deadenylation complex subunit PAN3, found in Lodderomyces elongisporus (strain ATCC 11503 / CBS 2605 / JCM 1781 / NBRC 1676 / NRRL YB-4239) (Yeast).